Here is a 339-residue protein sequence, read N- to C-terminus: DNA-directed RNA polymerase subunit alpha (339 aa).

An alpha N-terminal domain (alpha-NTD) region spans residues 1–233 (MVREKVRIST…DLFIPFLHAE (233 aa)). An alpha C-terminal domain (alpha-CTD) region spans residues 267 to 339 (IALKSIFIDQ…FTINLPKNKF (73 aa)).

The protein belongs to the RNA polymerase alpha chain family. As to quaternary structure, in plastids the minimal PEP RNA polymerase catalytic core is composed of four subunits: alpha, beta, beta', and beta''. When a (nuclear-encoded) sigma factor is associated with the core the holoenzyme is formed, which can initiate transcription.

The protein localises to the plastid. It localises to the chloroplast. It catalyses the reaction RNA(n) + a ribonucleoside 5'-triphosphate = RNA(n+1) + diphosphate. Its function is as follows. DNA-dependent RNA polymerase catalyzes the transcription of DNA into RNA using the four ribonucleoside triphosphates as substrates. This is DNA-directed RNA polymerase subunit alpha from Populus alba (White poplar).